The sequence spans 1588 residues: Pentafunctional AROM polypeptide (1588 aa).

The segment at 1–392 is 3-dehydroquinate synthase; the sequence is MVQLAKVPIL…YGDSAQFVSD (392 aa). NAD(+) contacts are provided by residues 43 to 45, 78 to 81, 109 to 111, and D114; these read DTN, ETSK, and GGV. R125 lines the 7-phospho-2-dehydro-3-deoxy-D-arabino-heptonate pocket. 134-135 provides a ligand contact to NAD(+); sequence TS. Residues D141 and K147 each coordinate 7-phospho-2-dehydro-3-deoxy-D-arabino-heptonate. Residue K156 coordinates NAD(+). A 7-phospho-2-dehydro-3-deoxy-D-arabino-heptonate-binding site is contributed by N157. NAD(+) is bound by residues 174 to 177 and N185; that span reads WLET. Residue E189 coordinates Zn(2+). 7-phospho-2-dehydro-3-deoxy-D-arabino-heptonate is bound by residues 189–192 and K258; that span reads EVIK. E268 functions as the Proton acceptor; for 3-dehydroquinate synthase activity in the catalytic mechanism. 7-phospho-2-dehydro-3-deoxy-D-arabino-heptonate-binding positions include 272 to 276 and H279; that span reads RNLLN. H279 contributes to the Zn(2+) binding site. H283 (proton acceptor; for 3-dehydroquinate synthase activity) is an active-site residue. 7-phospho-2-dehydro-3-deoxy-D-arabino-heptonate is bound by residues H295 and K364. A Zn(2+)-binding site is contributed by H295. The interval 405 to 871 is EPSP synthase; that stretch reads VYPFKDIPAD…WDVLHSELGA (467 aa). C853 (for EPSP synthase activity) is an active-site residue. Positions 890–1080 are shikimate kinase; the sequence is SVVIIGMRAA…IPSGRSAFVC (191 aa). 895–902 is an ATP binding site; the sequence is GMRAAGKT. Residues 1081–1293 are 3-dehydroquinase; the sequence is LTFDDLTEQT…AAPGQLTVAQ (213 aa). H1198 acts as the Proton acceptor; for 3-dehydroquinate dehydratase activity in catalysis. The Schiff-base intermediate with substrate; for 3-dehydroquinate dehydratase activity role is filled by K1227. Residues 1306–1588 form a shikimate dehydrogenase region; sequence PKELFVVGKP…KAIFDAVTKE (283 aa).

This sequence in the N-terminal section; belongs to the sugar phosphate cyclases superfamily. Dehydroquinate synthase family. In the 2nd section; belongs to the EPSP synthase family. It in the 3rd section; belongs to the shikimate kinase family. The protein in the 4th section; belongs to the type-I 3-dehydroquinase family. This sequence in the C-terminal section; belongs to the shikimate dehydrogenase family. Homodimer. Zn(2+) serves as cofactor.

Its subcellular location is the cytoplasm. The enzyme catalyses 7-phospho-2-dehydro-3-deoxy-D-arabino-heptonate = 3-dehydroquinate + phosphate. The catalysed reaction is 3-dehydroquinate = 3-dehydroshikimate + H2O. It catalyses the reaction shikimate + NADP(+) = 3-dehydroshikimate + NADPH + H(+). It carries out the reaction shikimate + ATP = 3-phosphoshikimate + ADP + H(+). The enzyme catalyses 3-phosphoshikimate + phosphoenolpyruvate = 5-O-(1-carboxyvinyl)-3-phosphoshikimate + phosphate. The protein operates within metabolic intermediate biosynthesis; chorismate biosynthesis; chorismate from D-erythrose 4-phosphate and phosphoenolpyruvate: step 2/7. It participates in metabolic intermediate biosynthesis; chorismate biosynthesis; chorismate from D-erythrose 4-phosphate and phosphoenolpyruvate: step 3/7. It functions in the pathway metabolic intermediate biosynthesis; chorismate biosynthesis; chorismate from D-erythrose 4-phosphate and phosphoenolpyruvate: step 4/7. Its pathway is metabolic intermediate biosynthesis; chorismate biosynthesis; chorismate from D-erythrose 4-phosphate and phosphoenolpyruvate: step 5/7. The protein operates within metabolic intermediate biosynthesis; chorismate biosynthesis; chorismate from D-erythrose 4-phosphate and phosphoenolpyruvate: step 6/7. The AROM polypeptide catalyzes 5 consecutive enzymatic reactions in prechorismate polyaromatic amino acid biosynthesis. This is Pentafunctional AROM polypeptide from Saccharomyces cerevisiae (strain RM11-1a) (Baker's yeast).